The following is a 457-amino-acid chain: UDP-N-acetyl-alpha-D-muramoyl-L-alanyl-L-glutamate epimerase (457 aa).

This sequence belongs to the MurL family.

It carries out the reaction UDP-N-acetyl-alpha-D-muramoyl-L-alanyl-L-glutamate + ATP + H2O = UDP-N-acetyl-alpha-D-muramoyl-L-alanyl-D-glutamate + AMP + diphosphate + H(+). Its pathway is cell wall biogenesis; peptidoglycan biosynthesis. In terms of biological role, cell wall formation. Catalyzes epimerization of the terminal L-glutamate in UDP-N-acetyl-alpha-D-muramoyl-L-alanyl-L-glutamate. The protein is UDP-N-acetyl-alpha-D-muramoyl-L-alanyl-L-glutamate epimerase of Salinispora tropica (strain ATCC BAA-916 / DSM 44818 / JCM 13857 / NBRC 105044 / CNB-440).